The following is a 1648-amino-acid chain: Homeostatic regulator of DAG (1648 aa).

Positions 5–101 (IPPTLPLDLQ…YRVTTINSTS (97 aa)) constitute a DMAP1-binding domain. Asparagine 28, asparagine 71, and asparagine 98 each carry an N-linked (GlcNAc...) asparagine glycan. 2 disordered regions span residues 52 to 73 (PYTP…RNTS) and 96 to 130 (TINS…ENGS). Basic residues predominate over residues 60–71 (NSRKSKHLHRRN). Composition is skewed to polar residues over residues 96–105 (TINSTSANNT) and 113–128 (YTAS…SDEN). Serine 99 bears the Phosphoserine mark. N-linked (GlcNAc...) asparagine glycans are attached at residues asparagine 128, asparagine 151, and asparagine 209. The fatty acyl-AMP ligase-like domain 1 stretch occupies residues 158-893 (AMTDSLPLIL…VEKKFLNNDL (736 aa)). The helical transmembrane segment at 228–248 (VIEFTIALLGCFISGMAAVPV) threads the bilayer. 5 N-linked (GlcNAc...) asparagine glycosylation sites follow: asparagine 288, asparagine 328, asparagine 575, asparagine 644, and asparagine 730. Serine 751 is modified (phosphoserine). N-linked (GlcNAc...) asparagine glycosylation is found at asparagine 881, asparagine 917, asparagine 995, and asparagine 1009. Residues 950–1648 (VKPKLALQCS…LLSDYEKDNI (699 aa)) are fatty acyl-AMP ligase-like domain 2. A helical membrane pass occupies residues 1061-1081 (YVAMIMACLYCNLLVIPLPSV). Asparagine 1198 carries N-linked (GlcNAc...) asparagine glycosylation. A helical transmembrane segment spans residues 1224-1244 (GLGFMFSCLLGIYTGASTCLF). N-linked (GlcNAc...) asparagine glycans are attached at residues asparagine 1301, asparagine 1302, asparagine 1447, asparagine 1472, asparagine 1488, asparagine 1565, asparagine 1597, and asparagine 1634.

It localises to the vacuole membrane. Its subcellular location is the mitochondrion membrane. Functionally, homeostatic regulator of a chemically distinct subset of diacylglycerols (DAGs) with C36 chain length that prevents the toxic accumulation of these specific DAGs in the logarithmic growth phase, which otherwise leads to endoplasmic reticulum stress. Maintains the basal level of DAG subspecies by directly facilitating DAG to triacylglycerol (TAG) conversion process, possibly via adenylation activity of its FLD domains. Does not affect the abundant DAG species (representing over 90% of total DAG pool), comprised of C32 and C34 chain lengths. Required for vacuole fusion-mediated osmoadaptation. The chain is Homeostatic regulator of DAG from Saccharomyces cerevisiae (strain ATCC 204508 / S288c) (Baker's yeast).